A 351-amino-acid chain; its full sequence is Methionine import ATP-binding protein MetN (351 aa).

Positions 2–241 constitute an ABC transporter domain; that stretch reads IVTEALTKAF…PQHAVTRAFV (240 aa). 38–45 is an ATP binding site; the sequence is GRSGAGKS.

The protein belongs to the ABC transporter superfamily. Methionine importer (TC 3.A.1.24) family. The complex is composed of two ATP-binding proteins (MetN), two transmembrane proteins (MetI) and a solute-binding protein (MetQ).

The protein resides in the cell inner membrane. It carries out the reaction L-methionine(out) + ATP + H2O = L-methionine(in) + ADP + phosphate + H(+). The catalysed reaction is D-methionine(out) + ATP + H2O = D-methionine(in) + ADP + phosphate + H(+). Its function is as follows. Part of the ABC transporter complex MetNIQ involved in methionine import. Responsible for energy coupling to the transport system. The polypeptide is Methionine import ATP-binding protein MetN (Rhodospirillum rubrum (strain ATCC 11170 / ATH 1.1.1 / DSM 467 / LMG 4362 / NCIMB 8255 / S1)).